Reading from the N-terminus, the 369-residue chain is Glutamate 5-kinase (369 aa).

ATP is bound at residue lysine 11. 3 residues coordinate substrate: serine 51, aspartate 138, and asparagine 150. ATP-binding positions include 170-171 (TD) and 212-218 (TGGMATK). The region spanning 277 to 355 (KGSIVIDEGA…QDIYAVLGYE (79 aa)) is the PUA domain.

Belongs to the glutamate 5-kinase family.

Its subcellular location is the cytoplasm. It catalyses the reaction L-glutamate + ATP = L-glutamyl 5-phosphate + ADP. The protein operates within amino-acid biosynthesis; L-proline biosynthesis; L-glutamate 5-semialdehyde from L-glutamate: step 1/2. Its function is as follows. Catalyzes the transfer of a phosphate group to glutamate to form L-glutamate 5-phosphate. This chain is Glutamate 5-kinase, found in Aliivibrio fischeri (strain ATCC 700601 / ES114) (Vibrio fischeri).